The chain runs to 884 residues: Alanine--tRNA ligase (884 aa).

Zn(2+) is bound by residues histidine 572, histidine 576, cysteine 673, and histidine 677.

Belongs to the class-II aminoacyl-tRNA synthetase family. Zn(2+) is required as a cofactor.

Its subcellular location is the cytoplasm. The catalysed reaction is tRNA(Ala) + L-alanine + ATP = L-alanyl-tRNA(Ala) + AMP + diphosphate. Its function is as follows. Catalyzes the attachment of alanine to tRNA(Ala) in a two-step reaction: alanine is first activated by ATP to form Ala-AMP and then transferred to the acceptor end of tRNA(Ala). Also edits incorrectly charged Ser-tRNA(Ala) and Gly-tRNA(Ala) via its editing domain. The protein is Alanine--tRNA ligase of Xylella fastidiosa (strain 9a5c).